A 148-amino-acid chain; its full sequence is MGRLISVSFGLLVVFLSLSGTGAALNCASGWSGYDQHCYKVFDKPKSWADAEKFCKKQTSGGHLVSFHSSEETDFVVKLVSQTLESQILWMGLSKVWNQCDWGWSNGAKLKYKAWAEESYCVYFSSTKKGWRSRACRLLGHFVCKSPA.

A signal peptide spans 1-24 (MGRLISVSFGLLVVFLSLSGTGAA). 3 disulfides stabilise this stretch: Cys27–Cys38, Cys55–Cys144, and Cys121–Cys136. Positions 34 to 145 (YDQHCYKVFD…CRLLGHFVCK (112 aa)) constitute a C-type lectin domain.

Belongs to the snaclec family. In terms of assembly, heterodimer; disulfide-linked. As to expression, expressed by the venom gland.

It is found in the secreted. Functionally, interferes with one step of hemostasis (modulation of platelet aggregation, or coagulation cascade, for example). This chain is Snaclec B2, found in Macrovipera lebetinus (Levantine viper).